The chain runs to 72 residues: MAGKKKLLAELREKSTDELDAFIHENKKALFSLRAEVGLQNKAVKTHLFSMYKKNIARSMTVKQEKEGKIDG.

Belongs to the universal ribosomal protein uL29 family.

The chain is Large ribosomal subunit protein uL29 from Chlamydia felis (strain Fe/C-56) (Chlamydophila felis).